The following is a 283-amino-acid chain: 4-diphosphocytidyl-2-C-methyl-D-erythritol kinase (283 aa).

K10 is an active-site residue. 99 to 109 (PMGGGLGGGSS) serves as a coordination point for ATP. Residue D141 is part of the active site.

This sequence belongs to the GHMP kinase family. IspE subfamily. Homodimer.

The catalysed reaction is 4-CDP-2-C-methyl-D-erythritol + ATP = 4-CDP-2-C-methyl-D-erythritol 2-phosphate + ADP + H(+). It functions in the pathway isoprenoid biosynthesis; isopentenyl diphosphate biosynthesis via DXP pathway; isopentenyl diphosphate from 1-deoxy-D-xylulose 5-phosphate: step 3/6. Its function is as follows. Catalyzes the phosphorylation of the position 2 hydroxy group of 4-diphosphocytidyl-2C-methyl-D-erythritol. The protein is 4-diphosphocytidyl-2-C-methyl-D-erythritol kinase of Escherichia coli O9:H4 (strain HS).